Here is a 178-residue protein sequence, read N- to C-terminus: Interleukin-17B (178 aa).

Positions 1-22 (MDWPHSLLFLLAISIFLGPSQP) are cleaved as a signal peptide. Positions 21–44 (QPRNTKGKRKGQVRPGPLAPGPHQ) are disordered. An N-linked (GlcNAc...) asparagine glycan is attached at Asn75. 2 disulfides stabilise this stretch: Cys121–Cys176 and Cys126–Cys178.

Belongs to the IL-17 family.

It is found in the secreted. Stimulates the release of tumor necrosis factor alpha and IL-1-beta from the monocytic cell line THP-1. The chain is Interleukin-17B (IL17B) from Mesocricetus auratus (Golden hamster).